The sequence spans 229 residues: Peroxiredoxin-like 2A (229 aa).

The segment at 14-112 is thioredoxin fold; it reads MWSIGAGALG…DQLGVPLYAV (99 aa). Active-site redox-active residues include C85 and C88.

It belongs to the peroxiredoxin-like PRXL2 family. PRXL2A subfamily. As to expression, expressed in CSF1 and TNFSF11-stimulated CD14(+) peripheral blood mononuclear cells (PBMCs).

It is found in the cytoplasm. Its subcellular location is the secreted. Its function is as follows. Involved in redox regulation of the cell. Acts as an antioxidant. Inhibits TNFSF11-induced NFKB1 and JUN activation and osteoclast differentiation. May affect bone resorption and help to maintain bone mass. Acts as a negative regulator of macrophage-mediated inflammation by inhibiting macrophage production of inflammatory cytokines, probably through suppression of the MAPK signaling pathway. The chain is Peroxiredoxin-like 2A from Homo sapiens (Human).